We begin with the raw amino-acid sequence, 493 residues long: Glycylpeptide N-tetradecanoyltransferase (493 aa).

H45–W48 is a binding site for tetradecanoyl-CoA. The interval V53–P73 is disordered. Tetradecanoyl-CoA contacts are provided by residues L182–V184 and S190–A194. L493 (proton acceptor; via carboxylate) is an active-site residue.

Belongs to the NMT family. In terms of assembly, monomer.

It localises to the cytoplasm. It carries out the reaction N-terminal glycyl-[protein] + tetradecanoyl-CoA = N-tetradecanoylglycyl-[protein] + CoA + H(+). In terms of biological role, adds a myristoyl group to the N-terminal glycine residue of certain cellular proteins. The chain is Glycylpeptide N-tetradecanoyltransferase from Cryptococcus neoformans var. neoformans serotype D (strain B-3501A) (Filobasidiella neoformans).